The chain runs to 163 residues: Putative 4-hydroxy-4-methyl-2-oxoglutarate aldolase (163 aa).

Substrate-binding positions include 79 to 82 (GDQL) and arginine 101. Aspartate 102 serves as a coordination point for a divalent metal cation.

The protein belongs to the class II aldolase/RraA-like family. Homotrimer. It depends on a divalent metal cation as a cofactor.

It catalyses the reaction 4-hydroxy-4-methyl-2-oxoglutarate = 2 pyruvate. It carries out the reaction oxaloacetate + H(+) = pyruvate + CO2. Functionally, catalyzes the aldol cleavage of 4-hydroxy-4-methyl-2-oxoglutarate (HMG) into 2 molecules of pyruvate. Also contains a secondary oxaloacetate (OAA) decarboxylase activity due to the common pyruvate enolate transition state formed following C-C bond cleavage in the retro-aldol and decarboxylation reactions. The protein is Putative 4-hydroxy-4-methyl-2-oxoglutarate aldolase of Dechloromonas aromatica (strain RCB).